The sequence spans 466 residues: 55 kDa erythrocyte membrane protein (466 aa).

Residue threonine 2 is modified to N-acetylthreonine. 2 positions are modified to phosphoserine: serine 13 and serine 19. Threonine 49 carries the post-translational modification Phosphothreonine. Serine 52, serine 57, and serine 110 each carry phosphoserine. The region spanning 71–152 is the PDZ domain; that stretch reads LIQFEKVTEE…MISLKVIPNQ (82 aa). The SH3 domain maps to 158-228; sequence ALQMFMRAQF…PSPELQEWRV (71 aa). Residue serine 243 is modified to Phosphoserine. The segment at 268-466 is interaction with PALS1; sequence VVSYEEVVRL…PQWVPVSWVY (199 aa). In terms of domain architecture, Guanylate kinase-like spans 282–451; that stretch reads RKTLVLIGAS…TLKKLQEAFD (170 aa).

It belongs to the MAGUK family. Heterodimer with PALS1. Interacts with DLG5 and NF2. Interacts (via guanylate kinase-like domain) with WHRN (via third PDZ domain). In terms of processing, palmitoylated.

Its subcellular location is the cell membrane. It localises to the cell projection. The protein resides in the stereocilium. Functionally, essential regulator of neutrophil polarity. Regulates neutrophil polarization by regulating AKT1 phosphorylation through a mechanism that is independent of PIK3CG activity. This is 55 kDa erythrocyte membrane protein (MPP1) from Pongo abelii (Sumatran orangutan).